Reading from the N-terminus, the 188-residue chain is Gamma-glutamylcyclotransferase (188 aa).

Substrate is bound at residue 19-24; sequence YFAYGS. E98 acts as the Proton acceptor in catalysis. Y139 is a substrate binding site. At S173 the chain carries Phosphoserine.

It belongs to the gamma-glutamylcyclotransferase family. Homodimer.

The catalysed reaction is an alpha-(gamma-L-glutamyl)-L-amino acid = 5-oxo-L-proline + an L-alpha-amino acid. Functionally, catalyzes the formation of 5-oxoproline from gamma-glutamyl dipeptides and may play a significant role in glutathione homeostasis. Induces release of cytochrome c from mitochondria with resultant induction of apoptosis. This chain is Gamma-glutamylcyclotransferase, found in Homo sapiens (Human).